Consider the following 109-residue polypeptide: Small ribosomal subunit protein bS6 (109 aa).

Belongs to the bacterial ribosomal protein bS6 family.

Functionally, binds together with bS18 to 16S ribosomal RNA. The sequence is that of Small ribosomal subunit protein bS6 from Ehrlichia canis (strain Jake).